Here is a 279-residue protein sequence, read N- to C-terminus: Phycobilisome rod-core linker polypeptide CpcG1 (279 aa).

The PBS-linker domain occupies Thr-11 to Phe-189.

Belongs to the phycobilisome linker protein family. As to quaternary structure, the phycobilisome is a hemidiscoidal structure that is composed of two distinct substructures: a core complex and a number of rods radiating from the core.

Its subcellular location is the cellular thylakoid membrane. In terms of biological role, rod-core linker protein required for attachment of phycocyanin to allophycocyanin in cores of phycobilisomes. Its function is as follows. Linker polypeptides determine the state of aggregation and the location of the disk-shaped phycobiliprotein units within the phycobilisome and modulate their spectroscopic properties in order to mediate a directed and optimal energy transfer. The polypeptide is Phycobilisome rod-core linker polypeptide CpcG1 (cpcG1) (Mastigocladus laminosus (Fischerella sp.)).